We begin with the raw amino-acid sequence, 211 residues long: Probable septum site-determining protein MinC (211 aa).

The protein belongs to the MinC family. Interacts with MinD and FtsZ.

Functionally, cell division inhibitor that blocks the formation of polar Z ring septums. Rapidly oscillates between the poles of the cell to destabilize FtsZ filaments that have formed before they mature into polar Z rings. Prevents FtsZ polymerization. This Clostridium acetobutylicum (strain ATCC 824 / DSM 792 / JCM 1419 / IAM 19013 / LMG 5710 / NBRC 13948 / NRRL B-527 / VKM B-1787 / 2291 / W) protein is Probable septum site-determining protein MinC.